Reading from the N-terminus, the 329-residue chain is Ketol-acid reductoisomerase (NADP(+)) (329 aa).

The KARI N-terminal Rossmann domain occupies T2 to T182. NADP(+) contacts are provided by residues Y25 to Q28, S51, S53, and D83 to Q86. The active site involves H108. Residue G134 coordinates NADP(+). The region spanning N183 to L328 is the KARI C-terminal knotted domain. Residues D191, E195, E227, and E231 each contribute to the Mg(2+) site. S252 is a substrate binding site.

It belongs to the ketol-acid reductoisomerase family. The cofactor is Mg(2+).

The enzyme catalyses (2R)-2,3-dihydroxy-3-methylbutanoate + NADP(+) = (2S)-2-acetolactate + NADPH + H(+). The catalysed reaction is (2R,3R)-2,3-dihydroxy-3-methylpentanoate + NADP(+) = (S)-2-ethyl-2-hydroxy-3-oxobutanoate + NADPH + H(+). The protein operates within amino-acid biosynthesis; L-isoleucine biosynthesis; L-isoleucine from 2-oxobutanoate: step 2/4. It functions in the pathway amino-acid biosynthesis; L-valine biosynthesis; L-valine from pyruvate: step 2/4. Its function is as follows. Involved in the biosynthesis of branched-chain amino acids (BCAA). Catalyzes an alkyl-migration followed by a ketol-acid reduction of (S)-2-acetolactate (S2AL) to yield (R)-2,3-dihydroxy-isovalerate. In the isomerase reaction, S2AL is rearranged via a Mg-dependent methyl migration to produce 3-hydroxy-3-methyl-2-ketobutyrate (HMKB). In the reductase reaction, this 2-ketoacid undergoes a metal-dependent reduction by NADPH to yield (R)-2,3-dihydroxy-isovalerate. This Prochlorococcus marinus (strain AS9601) protein is Ketol-acid reductoisomerase (NADP(+)).